A 408-amino-acid polypeptide reads, in one-letter code: NADH-quinone oxidoreductase subunit D (408 aa).

The protein belongs to the complex I 49 kDa subunit family. NDH-1 is composed of 14 different subunits. Subunits NuoB, C, D, E, F, and G constitute the peripheral sector of the complex.

It localises to the cell inner membrane. It catalyses the reaction a quinone + NADH + 5 H(+)(in) = a quinol + NAD(+) + 4 H(+)(out). In terms of biological role, NDH-1 shuttles electrons from NADH, via FMN and iron-sulfur (Fe-S) centers, to quinones in the respiratory chain. The immediate electron acceptor for the enzyme in this species is believed to be ubiquinone. Couples the redox reaction to proton translocation (for every two electrons transferred, four hydrogen ions are translocated across the cytoplasmic membrane), and thus conserves the redox energy in a proton gradient. This is NADH-quinone oxidoreductase subunit D from Campylobacter jejuni subsp. doylei (strain ATCC BAA-1458 / RM4099 / 269.97).